The primary structure comprises 83 residues: Homeobox protein DLX-2 (83 aa).

Residues 1 to 14 show a composition bias toward polar residues; the sequence is STATDSSYYTNQQH. Disordered stretches follow at residues 1 to 27 and 63 to 83; these read STATDSSYYTNQQHPAGGGGGGASPYA and PYGTSSSPVNNEPDKEDLEPE.

It belongs to the distal-less homeobox family. Interacts (via homeobox DNA-binding domain) with POU4F2; this interaction enhances retinal ganglion cell (RGC) differentiation.

The protein localises to the nucleus. Acts as a transcriptional activator. Activates transcription of CGA/alpha-GSU, via binding to the downstream activin regulatory element (DARE) in the gene promoter. Plays a role in terminal differentiation of interneurons, such as amacrine and bipolar cells in the developing retina. Likely to play a regulatory role in the development of the ventral forebrain. May play a role in craniofacial patterning and morphogenesis. The protein is Homeobox protein DLX-2 (Dlx2) of Rattus norvegicus (Rat).